The following is a 253-amino-acid chain: Sulfate transporter CysZ (253 aa).

Transmembrane regions (helical) follow at residues 31-51 (FVIL…WWLF), 75-95 (LLWP…FSTI), 151-171 (IVLL…PVLW), and 222-242 (IPLL…AMWV).

Belongs to the CysZ family.

The protein localises to the cell inner membrane. In terms of biological role, high affinity, high specificity proton-dependent sulfate transporter, which mediates sulfate uptake. Provides the sulfur source for the cysteine synthesis pathway. This is Sulfate transporter CysZ from Escherichia coli (strain 55989 / EAEC).